Here is a 117-residue protein sequence, read N- to C-terminus: Ig heavy chain V region 5-76 (117 aa).

An N-terminal signal peptide occupies residues 1–19 (MNFVLSLIFLALILKGVQC). The interval 20–49 (EVHLVESGGGLVKPGGSLKLSCVVSGFTFN) is framework-1. Residues cysteine 41 and cysteine 115 are joined by a disulfide bond. The tract at residues 50 to 54 (KYAMS) is complementarity-determining-1. The segment at 55–68 (WVRQTPEKRLEWVA) is framework-2. The tract at residues 69 to 85 (TISSGGLYTYYPDSVKG) is complementarity-determining-2. A framework-3 region spans residues 86-117 (RFTISRDNAGNTLYLQMSSLRSEDTAMYYCAR).

The chain is Ig heavy chain V region 5-76 from Mus musculus (Mouse).